A 248-amino-acid chain; its full sequence is Peroxisomal membrane protein 11A (248 aa).

The Cytoplasmic portion of the chain corresponds to 1–97 (MATKAPEKIT…RSSRWDSNHE (97 aa)). Residues 98–118 (LVLLIIAYGGEGLYYFVEQFI) form a helical membrane-spanning segment. Residues 119–220 (WLTKSGLIDA…MTIADIRDGK (102 aa)) are Lumenal-facing. The chain crosses the membrane as a helical span at residues 221 to 241 (GVLSAPNVISSAGLFSAIVST). At 242–248 (HKNWISC) the chain is on the cytoplasmic side.

It belongs to the peroxin-11 family. In terms of assembly, homooligomer. Interacts with ARC5 and FIS1B on peroxisomes. As to expression, expressed in developing siliques.

It localises to the peroxisome membrane. Functionally, involved in peroxisomal proliferation. Promotes peroxisomal duplication, aggregation or elongation without fission. The protein is Peroxisomal membrane protein 11A (PEX11A) of Arabidopsis thaliana (Mouse-ear cress).